The following is a 119-amino-acid chain: UPF0342 protein Athe_0692 (119 aa).

It belongs to the UPF0342 family.

In Caldicellulosiruptor bescii (strain ATCC BAA-1888 / DSM 6725 / KCTC 15123 / Z-1320) (Anaerocellum thermophilum), this protein is UPF0342 protein Athe_0692.